Reading from the N-terminus, the 128-residue chain is Putative lipid-binding protein At4g00165 (128 aa).

Positions 1–23 are cleaved as a signal peptide; that stretch reads MGISKALRSLLILLLLNITFFFG. 4 cysteine pairs are disulfide-bonded: cysteine 34–cysteine 90, cysteine 46–cysteine 76, cysteine 56–cysteine 75, and cysteine 92–cysteine 128.

The protein belongs to the plant LTP family. PEARLI1 subfamily.

It is found in the secreted. This is Putative lipid-binding protein At4g00165 from Arabidopsis thaliana (Mouse-ear cress).